The chain runs to 347 residues: MKPPILTIIMSTVISGTIMVLISSHWLTVWIGFEMNMLAIVPILMKKFNPRAMEASTKYFLTQATASMLLMLGIIINLLLTGQWTVLNMPNPIASNTMTVALAMKLGLSPFHFWVPEVTQGVPLSSGMILLTWQKIAPLSILYQISPSTNPNLLMTMAALSVLVGGWGGLNQTQLRKILAYSSIAHMGWMIAVTTYNPTLMMLNLAIYIMMTLGTFMLFMLNSSTTTLSLSHVWNKLPLTTSLILMIMLSLGGLPPLSGFIPKWMIIHELTKNNMIIMATFMAITALLNLYFYMRLTYATALTMFPSTNIMKMKWQFENTKNTTLLPPLIVISTMLLPLTPMMLSLF.

9 helical membrane passes run 5–22 (ILTIIMSTVISGTIMVLI), 26–45 (WLTVWIGFEMNMLAIVPILM), 60–80 (FLTQATASMLLMLGIIINLLL), 150–170 (NPNLLMTMAALSVLVGGWGGL), 178–198 (ILAYSSIAHMGWMIAVTTYNP), 200–220 (LMMLNLAIYIMMTLGTFMLFM), 242–262 (SLILMIMLSLGGLPPLSGFIP), 274–294 (NMIIMATFMAITALLNLYFYM), and 324–344 (TLLPPLIVISTMLLPLTPMML).

Belongs to the complex I subunit 2 family. In terms of assembly, core subunit of respiratory chain NADH dehydrogenase (Complex I) which is composed of 45 different subunits. Interacts with TMEM242.

It is found in the mitochondrion inner membrane. The enzyme catalyses a ubiquinone + NADH + 5 H(+)(in) = a ubiquinol + NAD(+) + 4 H(+)(out). In terms of biological role, core subunit of the mitochondrial membrane respiratory chain NADH dehydrogenase (Complex I) which catalyzes electron transfer from NADH through the respiratory chain, using ubiquinone as an electron acceptor. Essential for the catalytic activity and assembly of complex I. The protein is NADH-ubiquinone oxidoreductase chain 2 of Martes flavigula (Yellow-throated marten).